The primary structure comprises 318 residues: Probable metal transport system membrane protein CT_070 (318 aa).

Transmembrane regions (helical) follow at residues 1–21 (MVAS…LVFF), 39–59 (IQVI…TFLV), 64–84 (AMYA…VCLF), 94–114 (QALT…IHFI), 124–144 (ASTA…LVFL), 170–190 (IFLV…SFVC), 196–216 (IFAF…MLLL), 226–246 (AVGV…AKLI), 252–272 (EMMV…PALS), and 285–305 (TSGL…VFVC).

The protein belongs to the ABC-3 integral membrane protein family.

Its subcellular location is the cell inner membrane. Its function is as follows. Part of an ATP-driven transport system CT_067/CT_068/CT_069/CT_070 for a metal. This Chlamydia trachomatis serovar D (strain ATCC VR-885 / DSM 19411 / UW-3/Cx) protein is Probable metal transport system membrane protein CT_070.